The chain runs to 1191 residues: Puratrophin-1 (1191 aa).

2 disordered regions span residues 1–152 and 707–728; these read MERP…DPVG and AGGGALPQASPTVPPPGSSDPR. S64 carries the phosphoserine modification. Positions 111-120 are enriched in polar residues; that stretch reads SHLSLAQGES. The DH domain maps to 732 to 908; the sequence is RLQLVLAEMV…HFQLRHGNDL (177 aa). In terms of domain architecture, PH spans 920-1027; the sequence is NLKEQGQLVR…WTADISHLLW (108 aa). Residues 1150–1176 form a disordered region; that stretch reads SLTAEDSEISSQCPSASGSSGSDSSCV. Residues 1159-1176 are compositionally biased toward low complexity; it reads SSQCPSASGSSGSDSSCV.

As to expression, expressed in kidney, Leydig cells in the testis, epithelial cells in the prostate gland and Langerhans islet in the pancreas. Isoform 1 and isoform 3 are strongly expressed in Purkinje cells and to a lower extent in other neurons (at protein level). Widely expressed at low levels. More strongly expressed in testis and pancreas.

Its function is as follows. Possible role in intracellular signaling and cytoskeleton dynamics at the Golgi. This is Puratrophin-1 (PLEKHG4) from Homo sapiens (Human).